The following is a 160-amino-acid chain: Lipoprotein signal peptidase (160 aa).

The next 4 helical transmembrane spans lie at 7–27 (WFWL…YITV), 39–59 (LWPG…FSFF), 62–82 (GAVW…FLGW), and 96–116 (GFIL…GYVV). Catalysis depends on residues Asp117 and Asp133. Residues 126–146 (FPVFNLADTFINIGIFFLLLA) traverse the membrane as a helical segment.

This sequence belongs to the peptidase A8 family.

It is found in the cell inner membrane. The catalysed reaction is Release of signal peptides from bacterial membrane prolipoproteins. Hydrolyzes -Xaa-Yaa-Zaa-|-(S,diacylglyceryl)Cys-, in which Xaa is hydrophobic (preferably Leu), and Yaa (Ala or Ser) and Zaa (Gly or Ala) have small, neutral side chains.. Its pathway is protein modification; lipoprotein biosynthesis (signal peptide cleavage). This protein specifically catalyzes the removal of signal peptides from prolipoproteins. This Gloeothece citriformis (strain PCC 7424) (Cyanothece sp. (strain PCC 7424)) protein is Lipoprotein signal peptidase.